Here is a 445-residue protein sequence, read N- to C-terminus: ATP synthase subunit b-delta (445 aa).

Positions 1–168 (MSIFIGQLIG…PSSAVLEAGA (168 aa)) are ATP synthase subunit b. The chain crosses the membrane as a helical span at residues 3–23 (IFIGQLIGFAVIVFILVKWVV). Positions 169-445 (SLNLRAASRE…LAAARTGLPD (277 aa)) are ATP synthase subunit delta.

The protein in the N-terminal section; belongs to the ATPase B chain family. It in the C-terminal section; belongs to the ATPase delta chain family. As to quaternary structure, F-type ATPases have 2 components, F(1) - the catalytic core - and F(0) - the membrane proton channel. F(1) has five subunits: alpha(3), beta(3), gamma(1), delta(1), epsilon(1). F(0) has three main subunits: a(1), b(2) and c(10-14). The alpha and beta chains form an alternating ring which encloses part of the gamma chain. F(1) is attached to F(0) by a central stalk formed by the gamma and epsilon chains, while a peripheral stalk is formed by the delta and b chains.

It localises to the cell membrane. F(1)F(0) ATP synthase produces ATP from ADP in the presence of a proton or sodium gradient. F-type ATPases consist of two structural domains, F(1) containing the extramembraneous catalytic core and F(0) containing the membrane proton channel, linked together by a central stalk and a peripheral stalk. During catalysis, ATP synthesis in the catalytic domain of F(1) is coupled via a rotary mechanism of the central stalk subunits to proton translocation. Functionally, this fusion protein includes a component of the F(0) channel (subunit b) and of the F(1) subunit (subunit delta). Two copies of subunit b and one of delta together form the peripheral 'stator' stalk which links F(1) to F(0). This chain is ATP synthase subunit b-delta (atpFH), found in Mycolicibacterium vanbaalenii (strain DSM 7251 / JCM 13017 / BCRC 16820 / KCTC 9966 / NRRL B-24157 / PYR-1) (Mycobacterium vanbaalenii).